The chain runs to 917 residues: Probable dipeptidyl-aminopeptidase B (917 aa).

Positions 1-16 (MATEKGHGRDDEERVP) are enriched in basic and acidic residues. The tract at residues 1–21 (MATEKGHGRDDEERVPLTRGS) is disordered. Over 1–99 (MATEKGHGRD…KPMHKSVKIA (99 aa)) the chain is Cytoplasmic. A helical; Signal-anchor for type II membrane protein membrane pass occupies residues 100–120 (LWTLLFLSLGGWSLAFVLFIF). Residues 121-917 (RSHDTYETPI…RAATWAGLSI (797 aa)) lie on the Vacuolar side of the membrane. N-linked (GlcNAc...) asparagine glycosylation is found at asparagine 135, asparagine 351, and asparagine 574. Serine 756 (charge relay system) is an active-site residue. The N-linked (GlcNAc...) asparagine glycan is linked to asparagine 815. Catalysis depends on charge relay system residues aspartate 833 and histidine 866. N-linked (GlcNAc...) asparagine glycosylation is present at asparagine 902.

This sequence belongs to the peptidase S9B family.

The protein resides in the vacuole membrane. It carries out the reaction Release of an N-terminal dipeptide, Xaa-Yaa-|-Zaa-, from a polypeptide, preferentially when Yaa is Pro, provided Zaa is neither Pro nor hydroxyproline.. Its function is as follows. Type IV dipeptidyl-peptidase which removes N-terminal dipeptides sequentially from polypeptides having unsubstituted N-termini provided that the penultimate residue is proline. In Ajellomyces capsulatus (strain H88) (Darling's disease fungus), this protein is Probable dipeptidyl-aminopeptidase B (DAPB).